We begin with the raw amino-acid sequence, 286 residues long: Probable aquaporin-3 (286 aa).

Residues Met-1–Pro-34 are disordered. Residues Met-1–Gly-52 are Cytoplasmic-facing. The chain crosses the membrane as a helical span at residues Glu-53–Leu-73. Over Gln-74–Asn-87 the chain is Extracellular. Residues Asn-81 and Asn-86 are each glycosylated (N-linked (GlcNAc...) asparagine). The helical transmembrane segment at Thr-88–Tyr-108 threads the bilayer. Residues Arg-109–Leu-135 are Cytoplasmic-facing. Residues Asn-116–Ala-118 carry the NPA 1 motif. Residues Phe-136 to Phe-156 form a helical membrane-spanning segment. Residues Pro-157–Gln-175 are Extracellular-facing. Asn-164 and Asn-170 each carry an N-linked (GlcNAc...) asparagine glycan. A helical transmembrane segment spans residues Gly-176–Ala-196. Topologically, residues Glu-197–Thr-202 are cytoplasmic. A helical transmembrane segment spans residues Phe-203–Val-223. The Extracellular segment spans residues Thr-224–Pro-244. The NPA 2 signature appears at Asn-229–Val-231. Residues Gly-245–Phe-265 traverse the membrane as a helical segment. Over Arg-266–Val-286 the chain is Cytoplasmic.

The protein belongs to the MIP/aquaporin (TC 1.A.8) family.

It is found in the membrane. It catalyses the reaction H2O(in) = H2O(out). Functionally, probable water channel that may have redundant functions with FgAQP5. This is Probable aquaporin-3 from Gibberella zeae (strain ATCC MYA-4620 / CBS 123657 / FGSC 9075 / NRRL 31084 / PH-1) (Wheat head blight fungus).